We begin with the raw amino-acid sequence, 122 residues long: Large ribosomal subunit protein uL18 (122 aa).

It belongs to the universal ribosomal protein uL18 family. As to quaternary structure, part of the 50S ribosomal subunit; part of the 5S rRNA/L5/L18/L25 subcomplex. Contacts the 5S and 23S rRNAs.

This is one of the proteins that bind and probably mediate the attachment of the 5S RNA into the large ribosomal subunit, where it forms part of the central protuberance. This chain is Large ribosomal subunit protein uL18, found in Lachnospira eligens (strain ATCC 27750 / DSM 3376 / VPI C15-48 / C15-B4) (Eubacterium eligens).